Consider the following 70-residue polypeptide: Plasticin-S1 (70 aa).

The N-terminal stretch at 1–22 (MAFLKKSLFLVLFLALVPLSIC) is a signal peptide. Positions 23–45 (EEEKREGENEKEQEDDNQSEEKR) are excised as a propeptide. Residues 25–45 (EKREGENEKEQEDDNQSEEKR) are disordered.

It belongs to the frog skin active peptide (FSAP) family. Plasticin subfamily. In terms of tissue distribution, expressed by the skin glands.

Its subcellular location is the secreted. The native peptide is a cationic amphipathic alpha-helical antimicrobial peptide with potent activity against both Gram-positive and Gram-negative bacteria. It has weak activity against fungi and shows low hemolytic activity. In Phyllomedusa sauvagei (Sauvage's leaf frog), this protein is Plasticin-S1.